The sequence spans 92 residues: MYKFKRSFRRRLSPIGSGNLIYYRNMSLISRFISEQGKILSRRVNRLTLKQQRLITIAIKQARILSLLPFINNEKQFERIESITRVKGFIKK.

Belongs to the bacterial ribosomal protein bS18 family. Part of the 30S ribosomal subunit.

It localises to the plastid. This is Small ribosomal subunit protein bS18c (rps18) from Epifagus virginiana (Beechdrops).